The chain runs to 478 residues: Ribosomal RNA small subunit methyltransferase F (478 aa).

S-adenosyl-L-methionine-binding positions include 123–129, Glu147, Asp174, and Asp192; that span reads AAAPGSK. The active-site Nucleophile is Cys245.

Belongs to the class I-like SAM-binding methyltransferase superfamily. RsmB/NOP family.

The protein localises to the cytoplasm. The catalysed reaction is cytidine(1407) in 16S rRNA + S-adenosyl-L-methionine = 5-methylcytidine(1407) in 16S rRNA + S-adenosyl-L-homocysteine + H(+). Specifically methylates the cytosine at position 1407 (m5C1407) of 16S rRNA. The chain is Ribosomal RNA small subunit methyltransferase F from Vibrio parahaemolyticus serotype O3:K6 (strain RIMD 2210633).